A 1052-amino-acid polypeptide reads, in one-letter code: 3-hydroxy-3-methylglutaryl coenzyme A reductase mokG (1052 aa).

6 helical membrane-spanning segments follow: residues 223 to 243, 253 to 273, 279 to 299, 349 to 369, 378 to 398, and 440 to 460; these read VDMAIIGLGYLALNMTLVSLF, FWLAASVLLSGAFAFVFGLGV, VPVDMLLLSEGIPFLVLTVGF, GWSIVQSYLLEIGALALGAVF, FCFLAAWMVLFDAILLFTFYA, and WKLIMVGGFVLFNVLQLSSFF. Positions 224 to 403 constitute an SSD domain; sequence DMAIIGLGYL…FTFYATILCV (180 aa). Positions 461–617 are linker; it reads YRIMGGFMTN…FKANQAESLT (157 aa). The interval 571 to 594 is disordered; it reads APKESAAPAPPSSPASVPSAVPVP. The segment covering 584-594 has biased composition (low complexity); that stretch reads PASVPSAVPVP. Positions 618 to 1044 are catalytic; that stretch reads DDELAELCLR…LVNAHMRHNR (427 aa). Glutamate 734 acts as the Charge relay system in catalysis. The N-linked (GlcNAc...) asparagine glycan is linked to asparagine 798. Catalysis depends on charge relay system residues lysine 867 and aspartate 943. Histidine 1039 serves as the catalytic Proton donor. Residue asparagine 1043 is glycosylated (N-linked (GlcNAc...) asparagine).

The protein belongs to the HMG-CoA reductase family.

It localises to the endoplasmic reticulum membrane. The enzyme catalyses (R)-mevalonate + 2 NADP(+) + CoA = (3S)-3-hydroxy-3-methylglutaryl-CoA + 2 NADPH + 2 H(+). The protein operates within polyketide biosynthesis; lovastatin biosynthesis. HMG-CoA reductase; part of the gene cluster that mediates the biosynthesis of monakolin K, also known as lovastatin, and which acts as a potent competitive inhibitor of HMG-CoA reductase. Monakolin K biosynthesis is performed in two stages. The first stage is catalyzed by the nonaketide synthase mokA, which belongs to type I polyketide synthases and catalyzes the iterative nine-step formation of the polyketide. This PKS stage is completed by the action of dehydrogenase mokE, which catalyzes the NADPH-dependent reduction of the unsaturated tetra-, penta- and heptaketide intermediates that arise during the mokA-mediated biosynthesis of the nonaketide chain and leads to dihydromonacolin L. Covalently bound dihydromonacolin L is released from mokA by the mokD esterase. Conversion of dihydromonacolin L into monacolin L and then monacolin J is subsequently performed with the participation of molecular oxygen and P450 monoogygenase mokC. Finally, mokF performs the conversion of monacoline J to monacoline K through the addition of the side-chain diketide moiety (2R)-2-methylbutanoate produced by the diketide synthase mokB. HMG-CoA reductase mokG may act as a down-regulator of monacolin K production. The chain is 3-hydroxy-3-methylglutaryl coenzyme A reductase mokG from Monascus pilosus (Red mold).